The following is a 156-amino-acid chain: 6,7-dimethyl-8-ribityllumazine synthase (156 aa).

5-amino-6-(D-ribitylamino)uracil is bound by residues phenylalanine 23, 57–59, and 81–83; these read SFE and AVI. 86–87 is a binding site for (2S)-2-hydroxy-3-oxobutyl phosphate; that stretch reads GT. The active-site Proton donor is the histidine 89. Phenylalanine 114 contributes to the 5-amino-6-(D-ribitylamino)uracil binding site. Arginine 128 provides a ligand contact to (2S)-2-hydroxy-3-oxobutyl phosphate.

The protein belongs to the DMRL synthase family. Forms an icosahedral capsid composed of 60 subunits, arranged as a dodecamer of pentamers.

It carries out the reaction (2S)-2-hydroxy-3-oxobutyl phosphate + 5-amino-6-(D-ribitylamino)uracil = 6,7-dimethyl-8-(1-D-ribityl)lumazine + phosphate + 2 H2O + H(+). Its pathway is cofactor biosynthesis; riboflavin biosynthesis; riboflavin from 2-hydroxy-3-oxobutyl phosphate and 5-amino-6-(D-ribitylamino)uracil: step 1/2. Functionally, catalyzes the formation of 6,7-dimethyl-8-ribityllumazine by condensation of 5-amino-6-(D-ribitylamino)uracil with 3,4-dihydroxy-2-butanone 4-phosphate. This is the penultimate step in the biosynthesis of riboflavin. The polypeptide is 6,7-dimethyl-8-ribityllumazine synthase (Alkalilimnicola ehrlichii (strain ATCC BAA-1101 / DSM 17681 / MLHE-1)).